The following is a 308-amino-acid chain: Protein FdhE homolog (308 aa).

This sequence belongs to the FdhE family.

The protein localises to the cytoplasm. Necessary for formate dehydrogenase activity. This Edwardsiella ictaluri (strain 93-146) protein is Protein FdhE homolog.